A 93-amino-acid chain; its full sequence is uncharacterized protein (93 aa).

The disordered stretch occupies residues 73-93 (KWTVSGPVKQDTGKTDPAEKN). Residues 83-93 (DTGKTDPAEKN) show a composition bias toward basic and acidic residues.

This is an uncharacterized protein from Rhodobacter capsulatus (Rhodopseudomonas capsulata).